The following is a 526-amino-acid chain: Bifunctional purine biosynthesis protein PurH (526 aa).

The MGS-like domain maps to 15 to 161 (DVVPIRRALI…KNHANVAIVV (147 aa)).

Belongs to the PurH family.

The catalysed reaction is (6R)-10-formyltetrahydrofolate + 5-amino-1-(5-phospho-beta-D-ribosyl)imidazole-4-carboxamide = 5-formamido-1-(5-phospho-D-ribosyl)imidazole-4-carboxamide + (6S)-5,6,7,8-tetrahydrofolate. It carries out the reaction IMP + H2O = 5-formamido-1-(5-phospho-D-ribosyl)imidazole-4-carboxamide. It functions in the pathway purine metabolism; IMP biosynthesis via de novo pathway; 5-formamido-1-(5-phospho-D-ribosyl)imidazole-4-carboxamide from 5-amino-1-(5-phospho-D-ribosyl)imidazole-4-carboxamide (10-formyl THF route): step 1/1. The protein operates within purine metabolism; IMP biosynthesis via de novo pathway; IMP from 5-formamido-1-(5-phospho-D-ribosyl)imidazole-4-carboxamide: step 1/1. The sequence is that of Bifunctional purine biosynthesis protein PurH from Leifsonia xyli subsp. xyli (strain CTCB07).